The chain runs to 125 residues: Small ribosomal subunit protein uS13 (125 aa).

This sequence belongs to the universal ribosomal protein uS13 family. As to quaternary structure, part of the 30S ribosomal subunit. Forms a loose heterodimer with protein S19. Forms two bridges to the 50S subunit in the 70S ribosome.

Functionally, located at the top of the head of the 30S subunit, it contacts several helices of the 16S rRNA. In the 70S ribosome it contacts the 23S rRNA (bridge B1a) and protein L5 of the 50S subunit (bridge B1b), connecting the 2 subunits; these bridges are implicated in subunit movement. Contacts the tRNAs in the A and P-sites. The chain is Small ribosomal subunit protein uS13 from Rickettsia bellii (strain OSU 85-389).